The following is a 201-amino-acid chain: Sec-independent protein translocase protein TatB (201 aa).

Residues 1-21 form a helical membrane-spanning segment; sequence MLDLGWSEILVIAVVLIVVVG. Positions 96–201 are disordered; it reads LSEAAKAKPA…RRKKTAGTAP (106 aa). Composition is skewed to low complexity over residues 102–114 and 159–187; these read AKPA…AADS and TSAK…APAK. The segment covering 189–201 has biased composition (basic residues); sequence PSPRRKKTAGTAP.

Belongs to the TatB family. As to quaternary structure, the Tat system comprises two distinct complexes: a TatABC complex, containing multiple copies of TatA, TatB and TatC subunits, and a separate TatA complex, containing only TatA subunits. Substrates initially bind to the TatABC complex, which probably triggers association of the separate TatA complex to form the active translocon.

The protein resides in the cell inner membrane. In terms of biological role, part of the twin-arginine translocation (Tat) system that transports large folded proteins containing a characteristic twin-arginine motif in their signal peptide across membranes. Together with TatC, TatB is part of a receptor directly interacting with Tat signal peptides. TatB may form an oligomeric binding site that transiently accommodates folded Tat precursor proteins before their translocation. The polypeptide is Sec-independent protein translocase protein TatB (Chelativorans sp. (strain BNC1)).